A 308-amino-acid polypeptide reads, in one-letter code: Aldo-keto reductase AKR2E4 (308 aa).

NADP(+) is bound by residues 22–29 and aspartate 53; that span reads GTGRGTAK. The active-site Proton donor is the tyrosine 58. NADP(+) contacts are provided by residues 158 to 159, arginine 215, and 259 to 269; these read SN and KSTNKQRIAQN.

The protein belongs to the short-chain dehydrogenases/reductases (SDR) family. As to expression, detected in hemolymph (at protein level). Detected in larval ovary.

Its activity is regulated as follows. Subject to substrate inhibition by high levels of 3-dehydroecdysone. In terms of biological role, NADP-dependent oxidoreductase with high 3-dehydroecdysone reductase activity. May play a role in the regulation of molting. Has lower activity with phenylglyoxal and isatin (in vitro). Has no activity with NADH as cosubstrate. Has no activity with nitrobenzaldehyde and 3-hydroxybenzaldehyde. This Bombyx mori (Silk moth) protein is Aldo-keto reductase AKR2E4 (akr2e).